The chain runs to 399 residues: S-adenosylmethionine synthase (399 aa).

His-17 is an ATP binding site. Mg(2+) is bound at residue Asp-19. A K(+)-binding site is contributed by Glu-45. Glu-58 and Gln-101 together coordinate L-methionine. Positions 101–111 (QSADIAMGVDQ) are flexible loop. ATP is bound by residues 177–179 (DGK), 244–245 (RF), Asp-253, 259–260 (RK), Ala-276, and Lys-280. Asp-253 provides a ligand contact to L-methionine. Lys-284 contacts L-methionine.

This sequence belongs to the AdoMet synthase family. Homotetramer; dimer of dimers. Mg(2+) is required as a cofactor. The cofactor is K(+).

It is found in the cytoplasm. It carries out the reaction L-methionine + ATP + H2O = S-adenosyl-L-methionine + phosphate + diphosphate. Its pathway is amino-acid biosynthesis; S-adenosyl-L-methionine biosynthesis; S-adenosyl-L-methionine from L-methionine: step 1/1. Functionally, catalyzes the formation of S-adenosylmethionine (AdoMet) from methionine and ATP. The overall synthetic reaction is composed of two sequential steps, AdoMet formation and the subsequent tripolyphosphate hydrolysis which occurs prior to release of AdoMet from the enzyme. The protein is S-adenosylmethionine synthase of Bacillus thuringiensis (strain Al Hakam).